The chain runs to 141 residues: Hemoglobin subunit alpha-2 (141 aa).

Residues 1-141 (VLTEDDKNHV…VCKDLVSKYR (141 aa)) form the Globin domain. His58 contributes to the O2 binding site. Heme b is bound at residue His87.

This sequence belongs to the globin family. As to quaternary structure, the major hemoglobin component (HbIII) is a heterotetramer of two alpha-2 chains and two beta-1 chains. Red blood cells.

In terms of biological role, involved in oxygen transport from the lung to the various peripheral tissues. The sequence is that of Hemoglobin subunit alpha-2 from Varanus albigularis (White-throated monitor).